Here is a 155-residue protein sequence, read N- to C-terminus: Cyanate hydratase (155 aa).

Residues Arg95, Glu98, and Ser121 contribute to the active site.

This sequence belongs to the cyanase family.

The enzyme catalyses cyanate + hydrogencarbonate + 3 H(+) = NH4(+) + 2 CO2. Catalyzes the reaction of cyanate with bicarbonate to produce ammonia and carbon dioxide. This Pseudomonas syringae pv. tomato (strain ATCC BAA-871 / DC3000) protein is Cyanate hydratase.